We begin with the raw amino-acid sequence, 164 residues long: Cytochrome c-type biogenesis protein CcmE (164 aa).

Residues 1–8 lie on the Cytoplasmic side of the membrane; the sequence is MNPRRKSR. Residues 9–29 traverse the membrane as a helical; Signal-anchor for type II membrane protein segment; the sequence is LYLAMVVLIGISLTTTLVLYA. Residues 30–164 lie on the Periplasmic side of the membrane; that stretch reads LRSNIDLFYT…RGTNTTGNAL (135 aa). Heme-binding residues include His-130 and Tyr-134. The tract at residues 140–164 is disordered; that stretch reads EEAMKENHSRPAAAYRGTNTTGNAL.

This sequence belongs to the CcmE/CycJ family.

It localises to the cell inner membrane. In terms of biological role, heme chaperone required for the biogenesis of c-type cytochromes. Transiently binds heme delivered by CcmC and transfers the heme to apo-cytochromes in a process facilitated by CcmF and CcmH. This Yersinia pseudotuberculosis serotype O:3 (strain YPIII) protein is Cytochrome c-type biogenesis protein CcmE.